Consider the following 269-residue polypeptide: MELLIKAFIMGIVEGLTEFLPISSTGHLIIVGKFIHFTGNFATMFEIVIQLGAILAVVFYYRKKIFASLKNLKPGSWGFNLWFKIFIAFIPAAVIGLLTHKYIEEHLFSPFTVAIALIAGAIMMIVIEDTFGKRYKIDNMDKVDTKKSLLIGIAQVMSLFPGMSRSASTIMGGMLAGLSVKAAAEFSFFLAIPTMFAATTLSLLKGFSAMSLLEWQALAVGFITSFLTALFVVDKFLPYLTRHSLKPFAYYRLAVGVLMILLVAEKIVK.

Transmembrane regions (helical) follow at residues 3 to 23, 41 to 61, 78 to 98, 107 to 127, 148 to 167, 184 to 204, 213 to 233, and 248 to 268; these read LLIKAFIMGIVEGLTEFLPIS, FATMFEIVIQLGAILAVVFYY, GFNLWFKIFIAFIPAAVIGLL, LFSPFTVAIALIAGAIMMIVI, SLLIGIAQVMSLFPGMSRSA, AEFSFFLAIPTMFAATTLSLL, LEWQALAVGFITSFLTALFVV, and FAYYRLAVGVLMILLVAEKIV.

It belongs to the UppP family.

The protein localises to the cell membrane. It carries out the reaction di-trans,octa-cis-undecaprenyl diphosphate + H2O = di-trans,octa-cis-undecaprenyl phosphate + phosphate + H(+). Its function is as follows. Catalyzes the dephosphorylation of undecaprenyl diphosphate (UPP). Confers resistance to bacitracin. The sequence is that of Undecaprenyl-diphosphatase from Thermoanaerobacter sp. (strain X514).